The sequence spans 283 residues: 4-hydroxy-3-methylbut-2-enyl diphosphate reductase (283 aa).

Position 12 (Cys12) interacts with [4Fe-4S] cluster. (2E)-4-hydroxy-3-methylbut-2-enyl diphosphate is bound by residues His40 and His72. Positions 40 and 72 each coordinate dimethylallyl diphosphate. 2 residues coordinate isopentenyl diphosphate: His40 and His72. Cys94 provides a ligand contact to [4Fe-4S] cluster. His122 lines the (2E)-4-hydroxy-3-methylbut-2-enyl diphosphate pocket. Dimethylallyl diphosphate is bound at residue His122. Residue His122 participates in isopentenyl diphosphate binding. The active-site Proton donor is Glu124. Thr160 lines the (2E)-4-hydroxy-3-methylbut-2-enyl diphosphate pocket. Cys188 lines the [4Fe-4S] cluster pocket. 3 residues coordinate (2E)-4-hydroxy-3-methylbut-2-enyl diphosphate: Ser216, Asn218, and Ser259. 3 residues coordinate dimethylallyl diphosphate: Ser216, Asn218, and Ser259. Isopentenyl diphosphate contacts are provided by Ser216, Asn218, and Ser259.

The protein belongs to the IspH family. The cofactor is [4Fe-4S] cluster.

It carries out the reaction isopentenyl diphosphate + 2 oxidized [2Fe-2S]-[ferredoxin] + H2O = (2E)-4-hydroxy-3-methylbut-2-enyl diphosphate + 2 reduced [2Fe-2S]-[ferredoxin] + 2 H(+). The catalysed reaction is dimethylallyl diphosphate + 2 oxidized [2Fe-2S]-[ferredoxin] + H2O = (2E)-4-hydroxy-3-methylbut-2-enyl diphosphate + 2 reduced [2Fe-2S]-[ferredoxin] + 2 H(+). The protein operates within isoprenoid biosynthesis; dimethylallyl diphosphate biosynthesis; dimethylallyl diphosphate from (2E)-4-hydroxy-3-methylbutenyl diphosphate: step 1/1. It participates in isoprenoid biosynthesis; isopentenyl diphosphate biosynthesis via DXP pathway; isopentenyl diphosphate from 1-deoxy-D-xylulose 5-phosphate: step 6/6. Functionally, catalyzes the conversion of 1-hydroxy-2-methyl-2-(E)-butenyl 4-diphosphate (HMBPP) into a mixture of isopentenyl diphosphate (IPP) and dimethylallyl diphosphate (DMAPP). Acts in the terminal step of the DOXP/MEP pathway for isoprenoid precursor biosynthesis. This Dictyoglomus turgidum (strain DSM 6724 / Z-1310) protein is 4-hydroxy-3-methylbut-2-enyl diphosphate reductase.